Here is a 460-residue protein sequence, read N- to C-terminus: NADH-ubiquinone oxidoreductase chain 4 (460 aa).

Helical transmembrane passes span 20–42 (PKWLWTTTTAHSLLIASISLMWF), 61–81 (PLSTPLLVLTCWLLPLMILAS), 93–113 (QRLYITLLASLQTFLIMAFGA), 114–134 (TEIIMFYIMFEATLIPTLIII), 148–168 (TYFLFYTLAGSLPLLVALLLL), 195–215 (IWWAACLIAFLVKMPLYGVHL), 225–245 (PVAGSMVLAAVLLKLGGYGMM), 258–278 (LAYPFIILALWGIIMTGSICL), 285–304 (SLIAYSSVSHMGLVAGGILI), 308–330 (WGFSGAIILMIAHGLVSSALFCL), 351–371 (IIFPLTAVWWFIANLANLALP), and 394–414 (ILLTGLGTLITAGYSLYMFLM).

Belongs to the complex I subunit 4 family.

It is found in the mitochondrion membrane. The catalysed reaction is a ubiquinone + NADH + 5 H(+)(in) = a ubiquinol + NAD(+) + 4 H(+)(out). In terms of biological role, core subunit of the mitochondrial membrane respiratory chain NADH dehydrogenase (Complex I) that is believed to belong to the minimal assembly required for catalysis. Complex I functions in the transfer of electrons from NADH to the respiratory chain. The immediate electron acceptor for the enzyme is believed to be ubiquinone. In Carassius auratus (Goldfish), this protein is NADH-ubiquinone oxidoreductase chain 4 (MT-ND4).